A 210-amino-acid polypeptide reads, in one-letter code: Thiamine-phosphate synthase (210 aa).

Residues 39-43 (QLREK) and asparagine 71 each bind 4-amino-2-methyl-5-(diphosphooxymethyl)pyrimidine. Mg(2+) contacts are provided by aspartate 72 and aspartate 91. Serine 110 contacts 4-amino-2-methyl-5-(diphosphooxymethyl)pyrimidine. 134 to 136 (TPT) is a binding site for 2-[(2R,5Z)-2-carboxy-4-methylthiazol-5(2H)-ylidene]ethyl phosphate. Residue lysine 137 coordinates 4-amino-2-methyl-5-(diphosphooxymethyl)pyrimidine. Glycine 163 contacts 2-[(2R,5Z)-2-carboxy-4-methylthiazol-5(2H)-ylidene]ethyl phosphate.

The protein belongs to the thiamine-phosphate synthase family. It depends on Mg(2+) as a cofactor.

The enzyme catalyses 2-[(2R,5Z)-2-carboxy-4-methylthiazol-5(2H)-ylidene]ethyl phosphate + 4-amino-2-methyl-5-(diphosphooxymethyl)pyrimidine + 2 H(+) = thiamine phosphate + CO2 + diphosphate. The catalysed reaction is 2-(2-carboxy-4-methylthiazol-5-yl)ethyl phosphate + 4-amino-2-methyl-5-(diphosphooxymethyl)pyrimidine + 2 H(+) = thiamine phosphate + CO2 + diphosphate. It catalyses the reaction 4-methyl-5-(2-phosphooxyethyl)-thiazole + 4-amino-2-methyl-5-(diphosphooxymethyl)pyrimidine + H(+) = thiamine phosphate + diphosphate. Its pathway is cofactor biosynthesis; thiamine diphosphate biosynthesis; thiamine phosphate from 4-amino-2-methyl-5-diphosphomethylpyrimidine and 4-methyl-5-(2-phosphoethyl)-thiazole: step 1/1. Functionally, condenses 4-methyl-5-(beta-hydroxyethyl)thiazole monophosphate (THZ-P) and 2-methyl-4-amino-5-hydroxymethyl pyrimidine pyrophosphate (HMP-PP) to form thiamine monophosphate (TMP). This is Thiamine-phosphate synthase from Campylobacter jejuni subsp. jejuni serotype O:2 (strain ATCC 700819 / NCTC 11168).